A 1403-amino-acid polypeptide reads, in one-letter code: DNA-directed RNA polymerase subunit beta' (1403 aa).

4 residues coordinate Zn(2+): C70, C72, C85, and C88. Residues D461, D463, and D465 each coordinate Mg(2+). Positions 687–708 (QQISQEETTGDRDGKRETRKQP) are disordered. Basic and acidic residues predominate over residues 695 to 706 (TGDRDGKRETRK). 4 residues coordinate Zn(2+): C805, C879, C886, and C889. The interval 1381–1403 (THGDTGPLGEPSRPVGTQTTGAA) is disordered.

The protein belongs to the RNA polymerase beta' chain family. In terms of assembly, the RNAP catalytic core consists of 2 alpha, 1 beta, 1 beta' and 1 omega subunit. When a sigma factor is associated with the core the holoenzyme is formed, which can initiate transcription. Requires Mg(2+) as cofactor. Zn(2+) serves as cofactor.

It carries out the reaction RNA(n) + a ribonucleoside 5'-triphosphate = RNA(n+1) + diphosphate. In terms of biological role, DNA-dependent RNA polymerase catalyzes the transcription of DNA into RNA using the four ribonucleoside triphosphates as substrates. In Myxococcus xanthus (strain DK1622), this protein is DNA-directed RNA polymerase subunit beta'.